Here is a 288-residue protein sequence, read N- to C-terminus: Diaminopimelate epimerase (288 aa).

Positions 14 and 67 each coordinate substrate. Catalysis depends on cysteine 76, which acts as the Proton donor. Substrate is bound by residues 77–78 (GN), asparagine 166, asparagine 199, and 217–218 (ER). The Proton acceptor role is filled by cysteine 226. 227-228 (GT) is a substrate binding site.

This sequence belongs to the diaminopimelate epimerase family. In terms of assembly, homodimer.

The protein resides in the cytoplasm. It carries out the reaction (2S,6S)-2,6-diaminopimelate = meso-2,6-diaminopimelate. It participates in amino-acid biosynthesis; L-lysine biosynthesis via DAP pathway; DL-2,6-diaminopimelate from LL-2,6-diaminopimelate: step 1/1. Functionally, catalyzes the stereoinversion of LL-2,6-diaminopimelate (L,L-DAP) to meso-diaminopimelate (meso-DAP), a precursor of L-lysine and an essential component of the bacterial peptidoglycan. This chain is Diaminopimelate epimerase, found in Bacillus cytotoxicus (strain DSM 22905 / CIP 110041 / 391-98 / NVH 391-98).